A 60-amino-acid chain; its full sequence is Potassium channel toxin-like Tx677 (60 aa).

A signal peptide spans 1 to 22; the sequence is MKISALVMITLLICSMMILCQG. 3 disulfide bridges follow: Cys-30–Cys-51, Cys-36–Cys-56, and Cys-40–Cys-58.

Belongs to the short scorpion toxin superfamily. Potassium channel inhibitor family. As to expression, expressed by the venom gland.

The protein localises to the secreted. Its function is as follows. Weakly inhibits Kv11.1/KCNH2/ERG1, Kv1.2/KCNA2 and Kv1.3/KCNA3 voltage-gated potassium channels. The sequence is that of Potassium channel toxin-like Tx677 from Buthus israelis (Israeli scorpion).